The following is a 235-amino-acid chain: Small ribosomal subunit protein uS3 (235 aa).

The 69-residue stretch at 39–107 folds into the KH type-2 domain; that stretch reads VRSYVKKKLI…PAQVNISEIR (69 aa).

It belongs to the universal ribosomal protein uS3 family. In terms of assembly, part of the 30S ribosomal subunit. Forms a tight complex with proteins S10 and S14.

In terms of biological role, binds the lower part of the 30S subunit head. Binds mRNA in the 70S ribosome, positioning it for translation. The chain is Small ribosomal subunit protein uS3 from Buchnera aphidicola subsp. Cinara cedri (strain Cc).